A 157-amino-acid chain; its full sequence is uncharacterized protein (157 aa).

The N-terminal stretch at 1 to 17 is a signal peptide; it reads MSMKTKAAFHLVLFGLA. A lipid anchor (N-palmitoyl cysteine) is attached at Cys18. Residue Cys18 is the site of S-diacylglycerol cysteine attachment. A run of 3 helical transmembrane segments spans residues 42-64, 98-120, and 124-146; these read MVFD…YLYL, ASYI…YPLF, and IPFF…YVIS.

The protein resides in the cell membrane. This is an uncharacterized protein from Bacillus subtilis (strain 168).